Reading from the N-terminus, the 166-residue chain is Small ribosomal subunit protein bS6 (166 aa).

2 stretches are compositionally biased toward basic and acidic residues: residues 96-142 (HEEG…DRPP) and 149-166 (GGDRGPRRPREGFEGGAE). Residues 96-166 (HEEGPSAMMQ…PREGFEGGAE (71 aa)) form a disordered region.

The protein belongs to the bacterial ribosomal protein bS6 family.

Binds together with bS18 to 16S ribosomal RNA. This chain is Small ribosomal subunit protein bS6, found in Mesorhizobium japonicum (strain LMG 29417 / CECT 9101 / MAFF 303099) (Mesorhizobium loti (strain MAFF 303099)).